The following is a 462-amino-acid chain: U2 small nuclear ribonucleoprotein auxiliary factor 35 kDa subunit-related protein 2 (462 aa).

Residues methionine 1–glycine 13 show a composition bias toward low complexity. Disordered regions lie at residues methionine 1–tyrosine 22, alanine 44–arginine 66, and tryptophan 115–glutamate 138. Residue lysine 49 forms a Glycyl lysine isopeptide (Lys-Gly) (interchain with G-Cter in SUMO2) linkage. The segment covering alanine 57 to arginine 66 has biased composition (basic and acidic residues). Residues glutamate 170 to proline 198 form a C3H1-type 1 zinc finger. An RRM domain is found at proline 202–valine 308. Residues arginine 310 to arginine 337 form a C3H1-type 2 zinc finger. Position 353 is a phosphoserine (serine 353). The tract at residues proline 354–proline 462 is disordered. A compositionally biased stretch (basic and acidic residues) spans asparagine 364–glycine 379. Serine 389 bears the Phosphoserine mark. Basic and acidic residues predominate over residues phenylalanine 392 to serine 403. Residues serine 404–methionine 417 are compositionally biased toward basic residues.

In terms of assembly, component of the U11/U12 snRNPs that are part of the U12-type spliceosome. Interacts (via RS domain) with SRSF1 and SRSF2. Interacts with U2AF2/U2AF65. In terms of processing, phosphorylated in the RS domain by SRPK1.

It localises to the nucleus. Its function is as follows. Pre-mRNA-binding protein required for splicing of both U2- and U12-type introns. Selectively interacts with the 3'-splice site of U2- and U12-type pre-mRNAs and promotes different steps in U2 and U12 intron splicing. Recruited to U12 pre-mRNAs in an ATP-dependent manner and is required for assembly of the prespliceosome, a precursor to other spliceosomal complexes. For U2-type introns, it is selectively and specifically required for the second step of splicing. The polypeptide is U2 small nuclear ribonucleoprotein auxiliary factor 35 kDa subunit-related protein 2 (Zrsr2) (Mus musculus (Mouse)).